We begin with the raw amino-acid sequence, 346 residues long: NADH-ubiquinone oxidoreductase chain 2 (346 aa).

Helical transmembrane passes span 1–21, 26–46, 60–80, 96–116, 122–142, 151–171, 178–198, 199–219, 242–262, 274–294, and 320–340; these read MSPYISPLFSITMIMSVMLIS, WVFMWLGLELGTLAFIPILVW, FIVQAMAAAVFFLGGMVSLSG, MMIMLAVVTKLGLAPFHYWVV, LNYIPGAVLLTWQKVPGLAVL, SSMLLLFGMVSALVGGLGGLG, LLAFSSISHLGWLVVGCVAGS, LLGLSYFTLYVVLSIPLFSIL, VLLGVGFLSLGGLPPFFGFFG, LLLGVSVVLITGTLISLFYYL, and LSGLMSGLLVLNMLGLFLVGG.

The protein belongs to the complex I subunit 2 family.

The protein resides in the mitochondrion inner membrane. The catalysed reaction is a ubiquinone + NADH + 5 H(+)(in) = a ubiquinol + NAD(+) + 4 H(+)(out). Functionally, core subunit of the mitochondrial membrane respiratory chain NADH dehydrogenase (Complex I) that is believed to belong to the minimal assembly required for catalysis. Complex I functions in the transfer of electrons from NADH to the respiratory chain. The immediate electron acceptor for the enzyme is believed to be ubiquinone. The protein is NADH-ubiquinone oxidoreductase chain 2 (ND2) of Branchiostoma floridae (Florida lancelet).